The following is a 375-amino-acid chain: All-trans-retinol dehydrogenase [NAD(+)] ADH1B (375 aa).

Ser2 bears the N-acetylserine mark. The residue at position 23 (Ser23) is a Phosphoserine. Position 35 is a phosphotyrosine (Tyr35). Residues Cys47, His68, Cys98, Cys101, Cys104, Cys112, and Cys175 each coordinate Zn(2+). Residues Gly200–Gly205, Asp224, Lys229, Val293–Val295, and Arg370 contribute to the NAD(+) site.

It belongs to the zinc-containing alcohol dehydrogenase family. In terms of assembly, homodimer or heterodimer of closely related subunits. The cofactor is Zn(2+).

The protein localises to the cytoplasm. It carries out the reaction all-trans-retinol + NAD(+) = all-trans-retinal + NADH + H(+). The catalysed reaction is all-trans-4-hydroxyretinol + NAD(+) = all-trans-4-hydroxyretinal + NADH + H(+). The enzyme catalyses all-trans-4-oxoretinol + NAD(+) = all-trans-4-oxoretinal + NADH + H(+). In terms of biological role, catalyzes the NAD-dependent oxidation of all-trans-retinol and its derivatives such as all-trans-4-hydroxyretinol and may participate in retinoid metabolism. In vitro can also catalyze the NADH-dependent reduction of all-trans-retinal and its derivatives such as all-trans-4-oxoretinal. Catalyzes in the oxidative direction with higher efficiency. Has the same affinity for all-trans-4-hydroxyretinol and all-trans-4-oxoretinal. In Pan troglodytes (Chimpanzee), this protein is All-trans-retinol dehydrogenase [NAD(+)] ADH1B.